Consider the following 217-residue polypeptide: tRNA (guanine-N(7)-)-methyltransferase (217 aa).

Residues Glu43, Asp68, Asn101, and Asn123 each coordinate S-adenosyl-L-methionine. Lys127 is a substrate binding site. Residues 129–134 (RHNKRR) are interaction with RNA. Residues Asp159 and 196 to 199 (TEYE) each bind substrate.

The protein belongs to the class I-like SAM-binding methyltransferase superfamily. TrmB family.

It carries out the reaction guanosine(46) in tRNA + S-adenosyl-L-methionine = N(7)-methylguanosine(46) in tRNA + S-adenosyl-L-homocysteine. It functions in the pathway tRNA modification; N(7)-methylguanine-tRNA biosynthesis. Functionally, catalyzes the formation of N(7)-methylguanine at position 46 (m7G46) in tRNA. This chain is tRNA (guanine-N(7)-)-methyltransferase, found in Clostridium botulinum (strain Loch Maree / Type A3).